A 467-amino-acid polypeptide reads, in one-letter code: Protection of telomeres protein 1a (467 aa).

It belongs to the telombin family. As to quaternary structure, component of the telomerase holoenzyme complex at least composed of TERT, CBF5 and POT1a. The RNA molecule associated to the telomerase complex, and providing a template for telomeric DNA synthesis, is most likely TR and not TER1 as described previously. Interacts with the N-terminal part of TERT. Interacts with CBF5. Interacts with CTC1 and STN1. Does not interact with TEN1. Expressed in roots, rosette leaves, cauline leaves, stems and flowers.

It localises to the nucleus. It is found in the chromosome. The protein resides in the telomere. Its subcellular location is the nucleolus. The protein localises to the cytoplasm. In terms of biological role, component of the telomerase ribonucleoprotein (RNP) complex that is essential for the positive regulation of telomere length. Binds RNA non-specifically. Binds specifically single-stranded telomeric DNA. Not required to recruit telomerase to telomeres, but stimulates TER1 RNP repeat addition processivity. In Arabidopsis thaliana (Mouse-ear cress), this protein is Protection of telomeres protein 1a.